A 546-amino-acid chain; its full sequence is MKLLASTVLVGAAAASITPQQQVLQNPFKSATKPVSDAWSKSMESLGHLTGSMKGMTAEAKAIWDEVSMLFPEAMEKAAFFSEPKPHTRKPDSTWDYIVKGADIQSVWVENSKGEKEREIDGKLEQYNLRAKKVDPSKLGVDTVKQYSGYLDDEEDDKHLFYWFFESRNDPKNDPVVLWLNGGPGCSSLTGLFLELGPSSIDKNLKLHNNPYSWNANASVIFLDQPVNVGYSYSGSSVSNTVAAGKDVYALLTLFFKQFPEYAKQDFHIAGESYAGHYIPVFTSEILSHKKRNINLKSVLIGNGLTDGLTQYEHYRPMACGDGGWPAVLGASECQAMDNALPRCQSLIQNCYDSESVWSCVPASIYCNNAMMGPYQRTGQNVYDVRGKCEDTSNLCYSALGWISEFLNKADVQKELGVEVSSYDSCNFDINRNFLFQGDWMKPFHRLVPGILEQIPVLIYAGDADFICNWLGNQAWTDALEWPGKKDFNAAKTKDLQLESGHKTGTFKSSGNFTFARIFGAGHMVPMDQPEASLDFLNKWLNDYTL.

A signal peptide spans 1–17; it reads MKLLASTVLVGAAAASI. The propeptide occupies 18–132; it reads TPQQQVLQNP…KLEQYNLRAK (115 aa). 5 disulfide bridges follow: Cys186–Cys426, Cys320–Cys334, Cys344–Cys367, Cys351–Cys360, and Cys389–Cys396. Residue Asn217 is glycosylated (N-linked (GlcNAc...) asparagine). The active site involves Ser273. Asp465 is a catalytic residue. A glycan (N-linked (GlcNAc...) asparagine) is linked at Asn512. His523 is a catalytic residue.

It belongs to the peptidase S10 family.

Its subcellular location is the vacuole. It carries out the reaction Release of a C-terminal amino acid with broad specificity.. Vacuolar carboxypeptidase involved in degradation of small peptides. Digests preferentially peptides containing an aliphatic or hydrophobic residue in P1' position, as well as methionine, leucine or phenylalanine in P1 position of ester substrate. This chain is Carboxypeptidase Y homolog A (CPYA), found in Botryotinia fuckeliana (strain B05.10) (Noble rot fungus).